The following is a 764-amino-acid chain: Protective antigen (764 aa).

Residues 1 to 29 (MKKRKVLIPLMALSTILVSSTGNLEVIQA) form the signal peptide. The tract at residues 30 to 287 (EVKQENRLLN…PEARHPLVAA (258 aa)) is domain 1, calcium-binding; LF and EF binding sites. One can recognise a PA14 domain in the interval 43–179 (SSSQGLLGYY…NKKEVISSDN (137 aa)). Positions 176–214 (SSDNLQLPELKQKSSNSRKKRSTSAGPTVPDRDNDGIPD) are disordered. Ca(2+)-binding residues include Asp-206, Asp-208, Asp-210, Ile-212, and Glu-217. An alpha-clamp region spans residues 231–239 (FLSPWISNI). Ca(2+) contacts are provided by Ser-251, Lys-254, and Asp-264. The tract at residues 288–516 (YPIVHVDMEN…SEVLPQIQET (229 aa)) is domain 2, membrane insertion and heptamerization. The segment at 302-333 (KNEDQSTQNTDSQTRTISKNTSTSRTHTSEVH) is disordered. The span at 306–327 (QSTQNTDSQTRTISKNTSTSRT) shows a compositional bias: polar residues. 2 beta stranded membrane-spanning segments follow: residues 331–342 (EVHGNAEVHASF) and 345–354 (IGGSVSAGFS). Positions 517-624 (TARIIFNGKD…KMNILIRDKR (108 aa)) are domain 3, heptamerization. The interval 625–764 (FHYDRNNIAV…IFSKKGYEIG (140 aa)) is domain 4, binding to the receptor.

The protein belongs to the bacterial binary toxin family. As to quaternary structure, interacts with host ANTXR1 and ANTXR2. In terms of assembly, homooligomer; homooligomerizes to form homoheptamers (PA-63(7)) or homooctamers (PA-63(8)). PA-63(7) or PA-63(8) form ring-shaped oligomers that are in a pre-pore conformation, which do not penetrate the host membrane. PA-63(8) displays an enhanced stability, suggesting that this form circulates in the blood to reach and exert toxicity even in distant tissues. Interacts with lethal factor (LF) and edema factor (EF); can bind LF and EF simultaneously and interaction takes place following homooligomerization on the host cell membrane. PA-63(7) homoheptamer interacts with three molecules of LF to form the PA(7)LF(3) complex, in which the relative position of the N-terminal alpha-helices in the three LFs determines which factor is translocated first. Proteolytic activation by FURIN cleaves the protein in two parts, PA-20 and PA-63; the latter is the mature protein. The cleavage occurs at the cell surface and probably in the serum of infected animals as well; both native and cleaved PA are able to bind to the cell receptor. The release of PA-20 from the remaining receptor-bound PA-63 exposes the binding site for EF and LF, and promotes oligomerization and internalization of the protein.

The protein resides in the secreted. It localises to the host cell membrane. Its subcellular location is the host endosome membrane. Functionally, protective antigen constitutes one of the three proteins composing the anthrax toxin; it mediates attachment to host cells and translocation of edema factor (EF) and lethal factor (LF) into the host cytoplasm. PA associated with LF forms the lethal toxin (LeTx) and causes death when injected; PA associated with EF forms the edema toxin (EdTx) and produces edema. PA induces immunity to infection with anthrax. Mediates the attachment to host cells by binding host cell receptors ANTXR1 and ANTXR2. Following host cell surface attachment, PA is cleaved by FURIN to generate the PA-63 (Protective antigen PA-63) form, which constitutes the mature form of the protein that oligomerizes and forms a pore to translocate the enzymatic toxin components edema factor (EF) and lethal factor (LF) into the host cytosol. In terms of biological role, mature form that oligomerizes and forms a pore to translocate the enzymatic toxin components edema factor (EF) and lethal factor (LF) into the host cytosol. Following attachment to host cell receptors and cleavage by FURIN, homooligomerizes to form ring-shaped oligomers that are in a pre-pore conformation, and associates with EF and LF. Toxin-leaded complexes are then endocytosed in a clathrin-dependent process, followed by a conformational change of oligomerized PA-63 from the pre-pore to pore state, which is triggered by the low pH in the endosome. Once active, the pore mediates unfolding of EF and LF, which pass through the pore and translocate into the host cytosol. The polypeptide is Protective antigen (pagA) (Bacillus anthracis).